The following is a 174-amino-acid chain: UPF0340 protein SAR2202 (174 aa).

It belongs to the UPF0340 family.

The protein is UPF0340 protein SAR2202 of Staphylococcus aureus (strain MRSA252).